A 415-amino-acid polypeptide reads, in one-letter code: MSVTPEVKSRGMKFAEEQLLKHGWTQGKGLGRRENGITQALKVTLKQDNHGVGHDPAKEFTDHWWSDLFNKTAASLVVDSGKDGVQIRRLSKETTQRSHPKPSLLYQKFVKTATLTSGEEKPDRDLGNCSDVDNHEPTPPKILTDEMLLKACEGRTAHKAARIGITMKAKLARLEAQEQAFLAQLKGSKALGTSQPLTDSEPSQKKKKKRKQKEGEEAATTEKSLGDELLGHTDRSFRDSRKKKKRQKAERQGTAIGSEEEEAAGESGPRELSTEQSDQPSRKKKKRRKQRHEEDGEMGVCDEGGRDVTSRPKAVNSGGDKDPRRSSKKRGTCGEDLDTQEEEGKDDLTKGERKVRRKDKRKRQQCCEEDLDVSSKDDGGTWVAEDAGERSRQYPKERAKKKKRKRDRGSEVDLS.

An N-acetylmethionine modification is found at M1. Phosphothreonine is present on T4. A G-patch domain is found at G11–A57. A Glycyl lysine isopeptide (Lys-Gly) (interchain with G-Cter in SUMO2) cross-link involves residue K46. T116 bears the Phosphothreonine mark. 2 disordered regions span residues T116–K141 and L191–S415. A compositionally biased stretch (basic and acidic residues) spans G118–K141. A Phosphoserine modification is found at S130. Positions L191 to E201 are enriched in polar residues. Over residues S224 to D239 the composition is skewed to basic and acidic residues. Position 258 is a phosphoserine (S258). Over residues E335–K345 the composition is skewed to acidic residues. Residues R353–Q364 show a composition bias toward basic residues. Over residues A387 to E397 the composition is skewed to basic and acidic residues. The span at R398–D407 shows a compositional bias: basic residues.

The protein is G patch domain-containing protein 4 (Gpatch4) of Mus musculus (Mouse).